The sequence spans 139 residues: Large ribosomal subunit protein bL21 (139 aa).

It belongs to the bacterial ribosomal protein bL21 family. In terms of assembly, part of the 50S ribosomal subunit. Contacts protein L20.

Its function is as follows. This protein binds to 23S rRNA in the presence of protein L20. This is Large ribosomal subunit protein bL21 from Prochlorococcus marinus (strain NATL1A).